The chain runs to 496 residues: Cobyric acid synthase (496 aa).

The GATase cobBQ-type domain occupies histidine 264–valine 458. Cysteine 345 acts as the Nucleophile in catalysis. The active site involves histidine 450.

The protein belongs to the CobB/CobQ family. CobQ subfamily.

It participates in cofactor biosynthesis; adenosylcobalamin biosynthesis. In terms of biological role, catalyzes amidations at positions B, D, E, and G on adenosylcobyrinic A,C-diamide. NH(2) groups are provided by glutamine, and one molecule of ATP is hydrogenolyzed for each amidation. This is Cobyric acid synthase from Acidovorax ebreus (strain TPSY) (Diaphorobacter sp. (strain TPSY)).